The primary structure comprises 279 residues: Nucleotide-binding protein THA_1518 (279 aa).

9–16 (GLSGAGKS) provides a ligand contact to ATP. A GTP-binding site is contributed by 57 to 60 (DARS).

It belongs to the RapZ-like family.

Displays ATPase and GTPase activities. This Thermosipho africanus (strain TCF52B) protein is Nucleotide-binding protein THA_1518.